A 210-amino-acid polypeptide reads, in one-letter code: Probable GTP-binding protein EngB (210 aa).

The region spanning 29–203 (NGIEIAFAGR…SNKLDSWFAP (175 aa)) is the EngB-type G domain. GTP contacts are provided by residues 37–44 (GRSNAGKS), 64–68 (GRTQL), 82–85 (DLPG), 149–152 (TKAD), and 181–184 (IYSA). Positions 44 and 66 each coordinate Mg(2+).

Belongs to the TRAFAC class TrmE-Era-EngA-EngB-Septin-like GTPase superfamily. EngB GTPase family. The cofactor is Mg(2+).

Its function is as follows. Necessary for normal cell division and for the maintenance of normal septation. This chain is Probable GTP-binding protein EngB, found in Haemophilus ducreyi (strain 35000HP / ATCC 700724).